The primary structure comprises 447 residues: Tubulin alpha chain (447 aa).

Q11, E71, G144, T145, T179, N206, and N228 together coordinate GTP. Residue E71 participates in Mg(2+) binding. E254 is an active-site residue.

Belongs to the tubulin family. Dimer of alpha and beta chains. A typical microtubule is a hollow water-filled tube with an outer diameter of 25 nm and an inner diameter of 15 nM. Alpha-beta heterodimers associate head-to-tail to form protofilaments running lengthwise along the microtubule wall with the beta-tubulin subunit facing the microtubule plus end conferring a structural polarity. Microtubules usually have 13 protofilaments but different protofilament numbers can be found in some organisms and specialized cells. The cofactor is Mg(2+).

Its subcellular location is the cytoplasm. It is found in the cytoskeleton. It catalyses the reaction GTP + H2O = GDP + phosphate + H(+). Functionally, tubulin is the major constituent of microtubules, a cylinder consisting of laterally associated linear protofilaments composed of alpha- and beta-tubulin heterodimers. Microtubules grow by the addition of GTP-tubulin dimers to the microtubule end, where a stabilizing cap forms. Below the cap, tubulin dimers are in GDP-bound state, owing to GTPase activity of alpha-tubulin. The protein is Tubulin alpha chain (TUBA) of Avena sativa (Oat).